A 105-amino-acid chain; its full sequence is MKLHVAALATLAVVCILAAGSEAAPKAMSDPAVVKAQLFPDAFWESFKNVSMEFKKMVHGLQTSNIGEHAKSLYTDTVAVLTPYLQKIRENVTKMYQVYVESKQH.

Residues 1–21 (MKLHVAALATLAVVCILAAGS) form the signal peptide. Positions 22–29 (EAAPKAMS) are excised as a propeptide.

Plasma.

It is found in the secreted. The sequence is that of Blood plasma apolipoprotein LAL1 from Petromyzon marinus (Sea lamprey).